Here is a 216-residue protein sequence, read N- to C-terminus: Probable GTP-binding protein EngB (216 aa).

The region spanning 43-216 (DRIEVCFAGR…TLRSIIAHLD (174 aa)) is the EngB-type G domain. Residues 51–58 (GRSNVGKS), 78–82 (GRTQE), 96–99 (DLPG), 163–166 (TKAD), and 197–199 (TSS) each bind GTP. 2 residues coordinate Mg(2+): S58 and T80.

This sequence belongs to the TRAFAC class TrmE-Era-EngA-EngB-Septin-like GTPase superfamily. EngB GTPase family. It depends on Mg(2+) as a cofactor.

Necessary for normal cell division and for the maintenance of normal septation. The chain is Probable GTP-binding protein EngB from Ruegeria sp. (strain TM1040) (Silicibacter sp.).